The chain runs to 209 residues: 3-hexulose-6-phosphate synthase (209 aa).

It belongs to the HPS/KGPDC family. HPS subfamily. Homodimer.

It carries out the reaction D-ribulose 5-phosphate + formaldehyde = D-arabino-hex-3-ulose 6-phosphate. It participates in one-carbon metabolism; formaldehyde assimilation via RuMP pathway; D-fructose 6-phosphate from D-ribulose 5-phosphate and formaldehyde: step 1/2. Its function is as follows. Catalyzes the condensation of ribulose 5-phosphate with formaldehyde to form 3-hexulose 6-phosphate. This is 3-hexulose-6-phosphate synthase (rmpA) from Methylomonas aminofaciens.